We begin with the raw amino-acid sequence, 427 residues long: Serine--tRNA ligase (427 aa).

235 to 237 (TSE) provides a ligand contact to L-serine. 266–268 (RSE) lines the ATP pocket. Position 289 (E289) interacts with L-serine. 353–356 (EISS) lines the ATP pocket. S388 contacts L-serine.

This sequence belongs to the class-II aminoacyl-tRNA synthetase family. Type-1 seryl-tRNA synthetase subfamily. As to quaternary structure, homodimer. The tRNA molecule binds across the dimer.

Its subcellular location is the cytoplasm. It carries out the reaction tRNA(Ser) + L-serine + ATP = L-seryl-tRNA(Ser) + AMP + diphosphate + H(+). It catalyses the reaction tRNA(Sec) + L-serine + ATP = L-seryl-tRNA(Sec) + AMP + diphosphate + H(+). The protein operates within aminoacyl-tRNA biosynthesis; selenocysteinyl-tRNA(Sec) biosynthesis; L-seryl-tRNA(Sec) from L-serine and tRNA(Sec): step 1/1. Its function is as follows. Catalyzes the attachment of serine to tRNA(Ser). Is also able to aminoacylate tRNA(Sec) with serine, to form the misacylated tRNA L-seryl-tRNA(Sec), which will be further converted into selenocysteinyl-tRNA(Sec). The polypeptide is Serine--tRNA ligase (Chromobacterium violaceum (strain ATCC 12472 / DSM 30191 / JCM 1249 / CCUG 213 / NBRC 12614 / NCIMB 9131 / NCTC 9757 / MK)).